A 304-amino-acid chain; its full sequence is Rhodopsin (304 aa).

Residues Tyr-1–Ala-13 are Extracellular-facing. A helical membrane pass occupies residues Tyr-14–Val-38. Over Thr-39–Asn-50 the chain is Cytoplasmic. Residues Tyr-51 to Phe-73 form a helical membrane-spanning segment. The Extracellular portion of the chain corresponds to Thr-74–Cys-87. A disulfide bridge links Cys-87 with Cys-164. A helical membrane pass occupies residues Asn-88–Ile-110. The short motif at Glu-111 to Trp-113 is the 'Ionic lock' involved in activated form stabilization element. At Glu-111–His-129 the chain is on the cytoplasmic side. Residues Ala-130–Val-150 form a helical membrane-spanning segment. Residues Gly-151–Ser-179 lie on the Extracellular side of the membrane. The N-linked (GlcNAc...) asparagine glycan is linked to Asn-177. A helical membrane pass occupies residues Phe-180 to Gly-201. The Cytoplasmic portion of the chain corresponds to Arg-202–Arg-229. A helical transmembrane segment spans residues Met-230 to Phe-251. The Extracellular segment spans residues Ile-252 to Val-263. The chain crosses the membrane as a helical span at residues Phe-264–Cys-285. The residue at position 273 (Lys-273) is an N6-(retinylidene)lysine. The Cytoplasmic segment spans residues Leu-286–Ala-304. 2 S-palmitoyl cysteine lipidation sites follow: Cys-299 and Cys-300.

This sequence belongs to the G-protein coupled receptor 1 family. Opsin subfamily. Phosphorylated on some or all of the serine and threonine residues present in the C-terminal region. In terms of processing, contains one covalently linked retinal chromophore.

The protein localises to the membrane. Its subcellular location is the cell projection. It localises to the cilium. The protein resides in the photoreceptor outer segment. Photoreceptor required for image-forming vision at low light intensity. While most salt water fish species use retinal as chromophore, most freshwater fish use 3-dehydroretinal, or a mixture of retinal and 3-dehydroretinal. Light-induced isomerization of 11-cis to all-trans retinal triggers a conformational change that activates signaling via G-proteins. Subsequent receptor phosphorylation mediates displacement of the bound G-protein alpha subunit by arrestin and terminates signaling. The protein is Rhodopsin (rho) of Ictalurus punctatus (Channel catfish).